The chain runs to 311 residues: Methionyl-tRNA formyltransferase (311 aa).

(6S)-5,6,7,8-tetrahydrofolate is bound at residue 109-112 (SLLP).

This sequence belongs to the Fmt family.

The catalysed reaction is L-methionyl-tRNA(fMet) + (6R)-10-formyltetrahydrofolate = N-formyl-L-methionyl-tRNA(fMet) + (6S)-5,6,7,8-tetrahydrofolate + H(+). In terms of biological role, attaches a formyl group to the free amino group of methionyl-tRNA(fMet). The formyl group appears to play a dual role in the initiator identity of N-formylmethionyl-tRNA by promoting its recognition by IF2 and preventing the misappropriation of this tRNA by the elongation apparatus. This Staphylococcus aureus (strain USA300) protein is Methionyl-tRNA formyltransferase.